Consider the following 130-residue polypeptide: Histone H2A type 2-B (130 aa).

A disordered region spans residues 1–22 (MSGRGKQGGKARAKAKSRSSRA). At Ser2 the chain carries N-acetylserine. A Phosphoserine; by RPS6KA5 modification is found at Ser2. A Citrulline; alternate modification is found at Arg4. Arg4 carries the symmetric dimethylarginine; by PRMT5; alternate modification. N6-(2-hydroxyisobutyryl)lysine; alternate occurs at positions 6 and 10. An N6-(beta-hydroxybutyryl)lysine; alternate modification is found at Lys6. Basic residues predominate over residues 7-19 (QGGKARAKAKSRS). At Lys10 the chain carries N6-lactoyllysine; alternate. Lys10 carries the N6-succinyllysine; alternate modification. Residues Lys14 and Lys16 each participate in a glycyl lysine isopeptide (Lys-Gly) (interchain with G-Cter in ubiquitin) cross-link. Lys37 is modified (N6-(2-hydroxyisobutyryl)lysine; alternate). Lys37 carries the N6-(beta-hydroxybutyryl)lysine; alternate modification. Lys37 bears the N6-crotonyllysine; alternate mark. 2 positions are modified to N6-(2-hydroxyisobutyryl)lysine: Lys75 and Lys76. Lys96 is modified (N6-(2-hydroxyisobutyryl)lysine; alternate). Lys96 carries the post-translational modification N6-succinyllysine; alternate. An N6-glutaryllysine; alternate modification is found at Lys96. The residue at position 105 (Gln105) is an N5-methylglutamine. N6-(2-hydroxyisobutyryl)lysine; alternate is present on Lys119. Lys119 and Lys120 each carry N6-crotonyllysine; alternate. Lys119 and Lys120 each carry N6-glutaryllysine; alternate. An N6-(beta-hydroxybutyryl)lysine; alternate modification is found at Lys120. Lys120 is covalently cross-linked (Glycyl lysine isopeptide (Lys-Gly) (interchain with G-Cter in ubiquitin); alternate). Position 121 is a phosphothreonine; by DCAF1 (Thr121).

The protein belongs to the histone H2A family. As to quaternary structure, the nucleosome is a histone octamer containing two molecules each of H2A, H2B, H3 and H4 assembled in one H3-H4 heterotetramer and two H2A-H2B heterodimers. The octamer wraps approximately 147 bp of DNA. Deiminated on Arg-4 in granulocytes upon calcium entry. Post-translationally, monoubiquitination of Lys-120 (H2AK119Ub) by RING1, TRIM37 and RNF2/RING2 complex gives a specific tag for epigenetic transcriptional repression and participates in X chromosome inactivation of female mammals. It is involved in the initiation of both imprinted and random X inactivation. Ubiquitinated H2A is enriched in inactive X chromosome chromatin. Ubiquitination of H2A functions downstream of methylation of 'Lys-27' of histone H3 (H3K27me). H2AK119Ub by RNF2/RING2 can also be induced by ultraviolet and may be involved in DNA repair. Following DNA double-strand breaks (DSBs), it is ubiquitinated through 'Lys-63' linkage of ubiquitin moieties by the E2 ligase UBE2N and the E3 ligases RNF8 and RNF168, leading to the recruitment of repair proteins to sites of DNA damage. Ubiquitination at Lys-14 and Lys-16 (H2AK13Ub and H2AK15Ub, respectively) in response to DNA damage is initiated by RNF168 that mediates monoubiquitination at these 2 sites, and 'Lys-63'-linked ubiquitin are then conjugated to monoubiquitin; RNF8 is able to extend 'Lys-63'-linked ubiquitin chains in vitro. Deubiquitinated by USP51 at Lys-14 and Lys-16 (H2AK13Ub and H2AK15Ub, respectively) after damaged DNA is repaired. H2AK119Ub and ionizing radiation-induced 'Lys-63'-linked ubiquitination (H2AK13Ub and H2AK15Ub) are distinct events. In terms of processing, phosphorylation on Ser-2 (H2AS1ph) is enhanced during mitosis. Phosphorylation on Ser-2 by RPS6KA5/MSK1 directly represses transcription. Acetylation of H3 inhibits Ser-2 phosphorylation by RPS6KA5/MSK1. Phosphorylation at Thr-121 (H2AT120ph) by DCAF1 is present in the regulatory region of many tumor suppresor genes and down-regulates their transcription. Symmetric dimethylation on Arg-4 by the PRDM1/PRMT5 complex may play a crucial role in the germ-cell lineage. Post-translationally, glutamine methylation at Gln-105 (H2AQ104me) by FBL is specifically dedicated to polymerase I. It is present at 35S ribosomal DNA locus and impairs binding of the FACT complex. In terms of processing, crotonylation (Kcr) is specifically present in male germ cells and marks testis-specific genes in post-meiotic cells, including X-linked genes that escape sex chromosome inactivation in haploid cells. Crotonylation marks active promoters and enhancers and confers resistance to transcriptional repressors. It is also associated with post-meiotically activated genes on autosomes. Hydroxybutyrylation of histones is induced by starvation. Post-translationally, lactylated in macrophages by EP300/P300 by using lactoyl-CoA directly derived from endogenous or exogenous lactate, leading to stimulates gene transcription.

It localises to the nucleus. It is found in the chromosome. Functionally, core component of nucleosome. Nucleosomes wrap and compact DNA into chromatin, limiting DNA accessibility to the cellular machineries which require DNA as a template. Histones thereby play a central role in transcription regulation, DNA repair, DNA replication and chromosomal stability. DNA accessibility is regulated via a complex set of post-translational modifications of histones, also called histone code, and nucleosome remodeling. In Mus musculus (Mouse), this protein is Histone H2A type 2-B.